A 941-amino-acid polypeptide reads, in one-letter code: RNA-directed RNA polymerase (941 aa).

The tract at residues 875 to 918 is disordered; it reads SARQGGMGLPPPPPPPLGGGGMAGPPPPPFMGLRPESSVPTSVP. Residues 905 to 918 are compositionally biased toward low complexity; that stretch reads MGLRPESSVPTSVP.

As to quaternary structure, forms a ribonucleoprotein complex with the 23S RNA, where a single polymerase molecule binds to a single viral RNA genome. Since the viral RNA is not encapsidated, ribonucleoprotein complex formation appears to be the strategy to survive in the host as persistent virus.

The protein localises to the host cytoplasm. It catalyses the reaction RNA(n) + a ribonucleoside 5'-triphosphate = RNA(n+1) + diphosphate. In terms of biological role, RNA-directed RNA polymerase that replicates the viral (+) and (-) genome. In Saccharomyces 23S RNA narnavirus (ScNV-23S), this protein is RNA-directed RNA polymerase.